Reading from the N-terminus, the 510-residue chain is Protein PLASTID TRANSCRIPTIONALLY ACTIVE 16, chloroplastic (510 aa).

Polar residues predominate over residues 1–14 (MASSSTSFPLTTAP). The N-terminal 19 residues, 1–19 (MASSSTSFPLTTAPPQGVR), are a transit peptide targeting the chloroplast. 2 disordered regions span residues 1 to 24 (MASS…NRRK) and 38 to 58 (LGKT…NPFQ). Over residues 41-51 (TKGDDDSEGKQ) the composition is skewed to basic and acidic residues. 94–123 (IFVAGATGQAGIRIAQTLLQRGFSVRAGVP) provides a ligand contact to NADP(+). A coiled-coil region spans residues 354–403 (ARERAEEEAKVAADKAREAAEAAKEFEKQMQKLSEKEAEAASLAEDAQQK). At Ser395 the chain carries Phosphoserine. At Thr451 the chain carries Phosphothreonine; by STN7. The disordered stretch occupies residues 453–493 (RGQAKARNLPPKKAVVKQRPSSPFASKPKEERPKKPEKEVR). Basic and acidic residues predominate over residues 479–493 (KPKEERPKKPEKEVR).

Belongs to the NAD(P)-dependent epimerase/dehydratase family. In terms of assembly, component of the plastid transcriptionally active chromosome required for plastid gene expression. Interacts with DEGP1 under high light conditions and maybe its degradation target. In terms of processing, excluded from chloroplast nucleoid when phosphorylated on Thr-451 by STN7 that may regulate membrane-anchoring functions of the nucleoid.

Its subcellular location is the plastid. It localises to the chloroplast stroma. It is found in the chloroplast nucleoid. The protein resides in the chloroplast thylakoid membrane. Functionally, probably involved in the regulation of plastid gene expression. The protein is Protein PLASTID TRANSCRIPTIONALLY ACTIVE 16, chloroplastic of Arabidopsis thaliana (Mouse-ear cress).